The following is an 885-amino-acid chain: Translation initiation factor IF-2 (885 aa).

Disordered regions lie at residues 135–159 and 184–289; these read KAKAEAEAKAKAEAEAKAKAKAAAE and QAEA…PESM. The segment covering 184–232 has biased composition (basic and acidic residues); sequence QAEATKRKQDEEAAKAAEKARLLAEENSKRWAEEERQRLEAERYSDHHI. The segment covering 253-266 has biased composition (basic residues); that stretch reads GRRARNKNTAKSKR. Over residues 267-276 the composition is skewed to basic and acidic residues; it reads GGKDARDGRE. Residues 385–554 enclose the tr-type G domain; the sequence is PRAPVVTIMG…LLQAEVLELK (170 aa). The G1 stretch occupies residues 394-401; it reads GHVDHGKT. Residue 394–401 coordinates GTP; that stretch reads GHVDHGKT. Residues 419–423 form a G2 region; it reads GITQH. The interval 440–443 is G3; that stretch reads DTPG. Residues 440–444 and 494–497 each bind GTP; these read DTPGH and NKMD. The tract at residues 494-497 is G4; it reads NKMD. Residues 530-532 form a G5 region; sequence SAK.

It belongs to the TRAFAC class translation factor GTPase superfamily. Classic translation factor GTPase family. IF-2 subfamily.

It localises to the cytoplasm. In terms of biological role, one of the essential components for the initiation of protein synthesis. Protects formylmethionyl-tRNA from spontaneous hydrolysis and promotes its binding to the 30S ribosomal subunits. Also involved in the hydrolysis of GTP during the formation of the 70S ribosomal complex. This chain is Translation initiation factor IF-2, found in Shewanella sp. (strain MR-7).